We begin with the raw amino-acid sequence, 37 residues long: Large ribosomal subunit protein bL36 (37 aa).

It belongs to the bacterial ribosomal protein bL36 family.

This is Large ribosomal subunit protein bL36 from Prochlorococcus marinus (strain MIT 9313).